Here is a 296-residue protein sequence, read N- to C-terminus: MNDTVEKSIERAKVLIESLPYMQEFRHKTIVIKYGGHAMVDEALKKQFALDVILLKQIGINPIIVHGGGPQINNLLDRLDIKPSYVQGMRVTDGETMDVVEMVLVGKVNKEIVGLINHCGGKAVGLSGRDGDLVCAEQLQMNQAQVGDNPPELIDVGRVGQVTKINSHVLETLSQDDFIPIIAPVGVGEDGRAFNINADLVASAIAAELSAEKLILLTDVPGVKNKAGDLLTTLEWQELNGLIEDGTIMGGMIPKVRCCEDAVKGGVAKTYIVDGRVEHAILLEIFTRDGVGTEIY.

Substrate-binding positions include 68–69 (GG), Arg-90, and Asn-195.

The protein belongs to the acetylglutamate kinase family. ArgB subfamily.

It localises to the cytoplasm. The catalysed reaction is N-acetyl-L-glutamate + ATP = N-acetyl-L-glutamyl 5-phosphate + ADP. It functions in the pathway amino-acid biosynthesis; L-arginine biosynthesis; N(2)-acetyl-L-ornithine from L-glutamate: step 2/4. Its function is as follows. Catalyzes the ATP-dependent phosphorylation of N-acetyl-L-glutamate. In Desulfotalea psychrophila (strain LSv54 / DSM 12343), this protein is Acetylglutamate kinase.